Reading from the N-terminus, the 1492-residue chain is Cystic fibrosis transmembrane conductance regulator (1492 aa).

The Cytoplasmic portion of the chain corresponds to 1–78; sequence MQRSPIEKAN…KLVNALRRCF (78 aa). The chain crosses the membrane as a helical span at residues 79-99; the sequence is FWRFLFYGILLYFVEFTKAVQ. The ABC transmembrane type-1 1 domain maps to 82-366; sequence FLFYGILLYF…SAIQTWYDSL (285 aa). Over 100 to 123 the chain is Extracellular; sequence PLCLGRIIASYNAKNTYEREIAYY. Residues 124–147 form a helical membrane-spanning segment; it reads LALGLCLLFVVRTLFLHPAVFGLQ. Topologically, residues 148–196 are cytoplasmic; it reads HLGMQMRIALFSLIYKKILKMSSRVLDKIDTGQLVSLLSNNLNKFDEGV. Residues 197–217 form a helical membrane-spanning segment; sequence AVAHFVWIAPVQVVLLMGLIW. Residues 218–223 are Extracellular-facing; sequence NELTEF. A helical transmembrane segment spans residues 224–244; sequence VFCGLGFLIMLALFQAWLGKK. Over 245–299 the chain is Cytoplasmic; sequence MMQYRDKRAGKINERLAITSEIIDNIQSVKVYCWEDAMEKIIDDIRQVELKLTRK. A helical membrane pass occupies residues 300–320; it reads VAYCRYFSSSAFFFSGFFVVF. At 321–340 the chain is on the extracellular side; sequence LSVVPYAFIHTIKLRRIFTT. A helical transmembrane segment spans residues 341 to 359; sequence ISYNIVLRMTVTRQFPSAI. The Cytoplasmic segment spans residues 360–867; the sequence is QTWYDSLGAI…YLRYVTTNRN (508 aa). ATP contacts are provided by residues tryptophan 402, serine 435, 459 to 466, and glutamine 494; that span reads GSTGSGKS. An ABC transporter 1 domain is found at 424–647; sequence NGDDGLFFSN…KPDFSSQLLG (224 aa). Residues 655 to 840 are disordered R region; it reads SAERRNSILT…EEINEEDLKE (186 aa). The chain crosses the membrane as a helical span at residues 868–888; it reads LVFVLILCLVIFLAEVAASLA. Residues 868 to 1169 form the ABC transmembrane type-1 2 domain; the sequence is LVFVLILCLV…AVNSSIDVDG (302 aa). At 889–932 the chain is on the extracellular side; that stretch reads GLWIISGLAINTGSQTNDTSTDLSHLSVFSKFITNGSHYYIFYI. 2 N-linked (GlcNAc...) asparagine glycosylation sites follow: asparagine 905 and asparagine 923. A discontinuously helical transmembrane segment spans residues 933-953; the sequence is YVGLADSFLALGVIRGLPLVH. The Cytoplasmic portion of the chain corresponds to 954–1004; sequence TLVTVSKDLHKQMLHSVLQGPMTAFNKMKAGRILNRFIKDTAIIDDMLPLT. Residues 1005 to 1025 form a helical membrane-spanning segment; it reads VFDFVQLILIVVGAICVVSVL. At 1026 to 1027 the chain is on the extracellular side; the sequence is QP. The chain crosses the membrane as a helical span at residues 1028–1048; the sequence is YTLLAAIPVAVIFIMLRAYFL. Over 1049–1109 the chain is Cytoplasmic; it reads RTSQQLKQLE…TANWFLYLST (61 aa). The helical transmembrane segment at 1110 to 1130 threads the bilayer; the sequence is LRWFQMRIDIVFVLFFIAVTF. The Extracellular portion of the chain corresponds to 1131-1144; that stretch reads IAIATHDVGEGQVG. A helical transmembrane segment spans residues 1145–1165; sequence IILTLAMNITSTLQWAVNSSI. The Cytoplasmic portion of the chain corresponds to 1166–1492; sequence DVDGLMRSVS…AEEDLQETRL (327 aa). Positions 1220–1453 constitute an ABC transporter 2 domain; sequence MMVNNLTAKY…ASLFKQVFGH (234 aa). Residues tyrosine 1229 and 1254–1261 contribute to the ATP site; that span reads GRTGAGKS. The segment covering 1465–1474 has biased composition (basic residues); sequence RNSSKRKTRP. Residues 1465 to 1492 are disordered; sequence RNSSKRKTRPKISALQEEAEEDLQETRL. Positions 1481–1492 are enriched in acidic residues; it reads EEAEEDLQETRL. Residues 1483-1485 carry the PDZ-binding motif; it reads AEE.

It belongs to the ABC transporter superfamily. ABCC family. CFTR transporter (TC 3.A.1.202) subfamily. Monomer; does not require oligomerization for channel activity. May form oligomers in the membrane. Post-translationally, phosphorylated; cAMP treatment promotes phosphorylation and activates the channel. Dephosphorylation decreases the ATPase activity (in vitro). Phosphorylation at PKA sites activates the channel. Phosphorylation at PKC sites enhances the response to phosphorylation by PKA. As to expression, expressed in the rectal gland (at protein level).

It localises to the apical cell membrane. It is found in the early endosome membrane. Its subcellular location is the cell membrane. The protein resides in the recycling endosome membrane. The protein localises to the endoplasmic reticulum membrane. The catalysed reaction is ATP + H2O + closed Cl(-) channel = ADP + phosphate + open Cl(-) channel.. The enzyme catalyses chloride(in) = chloride(out). It catalyses the reaction hydrogencarbonate(in) = hydrogencarbonate(out). It carries out the reaction ATP + H2O = ADP + phosphate + H(+). In terms of biological role, epithelial ion channel that plays an important role in the regulation of epithelial ion and water transport and fluid homeostasis. Mediates the transport of chloride ions across the cell membrane. Possesses an intrinsic ATPase activity and utilizes ATP to gate its channel; the passive flow of anions through the channel is gated by cycles of ATP binding and hydrolysis by the ATP-binding domains. The ion channel is also permeable to HCO(3)(-); selectivity depends on the extracellular chloride concentration. Exerts its function also by modulating the activity of other ion channels and transporters. Contributes to the regulation of the pH and the ion content of the epithelial fluid layer. This Squalus acanthias (Spiny dogfish) protein is Cystic fibrosis transmembrane conductance regulator.